We begin with the raw amino-acid sequence, 776 residues long: Photosystem I P700 chlorophyll a apoprotein A1 (776 aa).

Helical transmembrane passes span 76–99 (IFSA…FHGA), 162–185 (LMAL…FHYH), 201–225 (LQHH…HVAN), 309–327 (VAHH…GHVY), 368–391 (WHAQ…HHMY), 407–433 (LGLF…IAVI), 455–477 (AIIS…LYIH), and 557–575 (LMIH…LILL). The [4Fe-4S] cluster site is built by C599 and C608. 2 helical membrane-spanning segments follow: residues 615-636 (HVFL…YFSW) and 690-712 (LSGY…MFLF). H701 serves as a coordination point for divinylchlorophyll a'. The divinyl chlorophyll a site is built by M709 and Y717. W718 is a binding site for phylloquinone. A helical transmembrane segment spans residues 750 to 770 (AVGVTHFLFGGIVTTWAFFHA).

It belongs to the PsaA/PsaB family. As to quaternary structure, the PsaA/B heterodimer binds the P700 chlorophyll special pair and subsequent electron acceptors. PSI consists of a core antenna complex that captures photons, and an electron transfer chain that converts photonic excitation into a charge separation. The cyanobacterial PSI reaction center is composed of one copy each of PsaA,B,C,D,E,F,I,J,K,L,M and X, and forms trimeric complexes. Requires PSI electron transfer chain: 5 divinyl chlorophyll a, 1 divinyl chlorophyll a', 2 phylloquinones and 3 4Fe-4S clusters. PSI core antenna: 90 divinyl chlorophyll a, 22 carotenoids, 3 phospholipids and 1 galactolipid. P700 is a divinyl chlorophyll a/divinyl chlorophyll a' dimer, A0 is one or more chlorophyll divinyl a, A1 is one or both phylloquinones and FX is a shared 4Fe-4S iron-sulfur center. as cofactor.

Its subcellular location is the cellular thylakoid membrane. It catalyses the reaction reduced [plastocyanin] + hnu + oxidized [2Fe-2S]-[ferredoxin] = oxidized [plastocyanin] + reduced [2Fe-2S]-[ferredoxin]. Functionally, psaA and PsaB bind P700, the primary electron donor of photosystem I (PSI), as well as the electron acceptors A0, A1 and FX. PSI is a plastocyanin/cytochrome c6-ferredoxin oxidoreductase, converting photonic excitation into a charge separation, which transfers an electron from the donor P700 chlorophyll pair to the spectroscopically characterized acceptors A0, A1, FX, FA and FB in turn. Oxidized P700 is reduced on the lumenal side of the thylakoid membrane by plastocyanin or cytochrome c6. The polypeptide is Photosystem I P700 chlorophyll a apoprotein A1 (Prochlorococcus marinus (strain MIT 9313)).